The sequence spans 180 residues: uncharacterized protein (180 aa).

Coiled coils occupy residues 3-82 and 95-179; these read LKSL…QKIA and REYE…EKYG.

This is an uncharacterized protein from Aquifex aeolicus (strain VF5).